The following is a 79-amino-acid chain: U16-theraphotoxin-Cg1a (79 aa).

The N-terminal stretch at 1–19 (MRALLIIAGLALFLVVCNA) is a signal peptide. Residues 20 to 44 (SQVNEQRKLNEMLSVMFAVEEPQER) constitute a propeptide that is removed on maturation. 3 disulfides stabilise this stretch: cysteine 47–cysteine 62, cysteine 54–cysteine 67, and cysteine 61–cysteine 74.

Belongs to the neurotoxin 10 (Hwtx-1) family. 34 (Jztx-26) subfamily. In terms of tissue distribution, expressed by the venom gland.

It is found in the secreted. Functionally, probable ion channel inhibitor. The protein is U16-theraphotoxin-Cg1a of Chilobrachys guangxiensis (Chinese earth tiger tarantula).